A 77-amino-acid polypeptide reads, in one-letter code: Protein IDA (77 aa).

Residues 1–26 form the signal peptide; the sequence is MAPCRTMMVLLCFVLFLAASSSCVAA. The tract at residues 56–69 is RLK5-binding; sequence GVPIPPSAPSKRHN.

In terms of assembly, interaction with RLK5. In terms of tissue distribution, expressed specifically in the floral abscission zone.

The protein localises to the secreted. Its subcellular location is the extracellular space. Involved in an ethylene-independent separation step of floral abscission. Promotes abscission zone (AZ) cells rounding. May act with RLK5 and HSL2 as ligand-receptor pairs. This Arabidopsis thaliana (Mouse-ear cress) protein is Protein IDA.